The sequence spans 248 residues: Adenosylcobinamide-GDP ribazoletransferase (248 aa).

The next 8 membrane-spanning stretches (helical) occupy residues Glu-3 to Ile-23, Ser-35 to Leu-55, Ile-63 to Gly-83, Leu-109 to Ser-129, Leu-135 to Ile-155, Phe-180 to Asp-199, Leu-200 to Ser-219, and Asp-228 to Leu-248.

This sequence belongs to the CobS family. Requires Mg(2+) as cofactor.

Its subcellular location is the cell membrane. The catalysed reaction is alpha-ribazole + adenosylcob(III)inamide-GDP = adenosylcob(III)alamin + GMP + H(+). It carries out the reaction alpha-ribazole 5'-phosphate + adenosylcob(III)inamide-GDP = adenosylcob(III)alamin 5'-phosphate + GMP + H(+). It participates in cofactor biosynthesis; adenosylcobalamin biosynthesis; adenosylcobalamin from cob(II)yrinate a,c-diamide: step 7/7. In terms of biological role, joins adenosylcobinamide-GDP and alpha-ribazole to generate adenosylcobalamin (Ado-cobalamin). Also synthesizes adenosylcobalamin 5'-phosphate from adenosylcobinamide-GDP and alpha-ribazole 5'-phosphate. The protein is Adenosylcobinamide-GDP ribazoletransferase of Caldanaerobacter subterraneus subsp. tengcongensis (strain DSM 15242 / JCM 11007 / NBRC 100824 / MB4) (Thermoanaerobacter tengcongensis).